The chain runs to 365 residues: Gibberellin 20 oxidase 1-A (365 aa).

The region spanning 199–299 is the Fe2OG dioxygenase domain; that stretch reads GNDSIMRLNY…RKSLAFFLCP (101 aa). Residues His-224, Asp-226, and His-280 each coordinate Fe cation. Arg-290 is an active-site residue.

This sequence belongs to the iron/ascorbate-dependent oxidoreductase family. GA20OX subfamily. Fe cation is required as a cofactor. L-ascorbate serves as cofactor. In terms of tissue distribution, expressed in nodes and the ear of the elongating stem.

It catalyses the reaction gibberellin A12 + 2 2-oxoglutarate + 3 O2 + H(+) = gibberellin A9 + 2 succinate + 3 CO2 + 2 H2O. It carries out the reaction gibberellin A53 + 2 2-oxoglutarate + 3 O2 + H(+) = gibberellin A20 + 2 succinate + 3 CO2 + 2 H2O. Key oxidase enzyme in the biosynthesis of gibberellin that catalyzes the conversion of GA12 and GA53 to GA9 and GA20 respectively, via a three-step oxidation at C-20 of the GA skeleton. This is Gibberellin 20 oxidase 1-A (GA20ox1A) from Triticum aestivum (Wheat).